Consider the following 177-residue polypeptide: 3-hydroxydecanoyl-[acyl-carrier-protein] dehydratase (177 aa).

Histidine 71 is a catalytic residue.

Belongs to the thioester dehydratase family. FabA subfamily. As to quaternary structure, homodimer.

It localises to the cytoplasm. It catalyses the reaction a (3R)-hydroxyacyl-[ACP] = a (2E)-enoyl-[ACP] + H2O. The catalysed reaction is (3R)-hydroxydecanoyl-[ACP] = (2E)-decenoyl-[ACP] + H2O. It carries out the reaction (2E)-decenoyl-[ACP] = (3Z)-decenoyl-[ACP]. Its pathway is lipid metabolism; fatty acid biosynthesis. Its function is as follows. Necessary for the introduction of cis unsaturation into fatty acids. Catalyzes the dehydration of (3R)-3-hydroxydecanoyl-ACP to E-(2)-decenoyl-ACP and then its isomerization to Z-(3)-decenoyl-ACP. Can catalyze the dehydratase reaction for beta-hydroxyacyl-ACPs with saturated chain lengths up to 16:0, being most active on intermediate chain length. In Wigglesworthia glossinidia brevipalpis, this protein is 3-hydroxydecanoyl-[acyl-carrier-protein] dehydratase.